A 483-amino-acid polypeptide reads, in one-letter code: Probable cytochrome P450 517A1 (483 aa).

Residues 1–21 (MEIINVFLFLIILFLVKDFVK) form a helical membrane-spanning segment. Residue Cys429 coordinates heme.

The protein belongs to the cytochrome P450 family. It depends on heme as a cofactor.

Its subcellular location is the membrane. In Dictyostelium discoideum (Social amoeba), this protein is Probable cytochrome P450 517A1 (cyp517A1).